Here is a 463-residue protein sequence, read N- to C-terminus: Nucleobindin-1 (463 aa).

Positions 1-26 (MPPSGPQGTLLLLPLLLLLLLRAVLA) are cleaved as a signal peptide. Position 86 is a phosphoserine (serine 86). Residue threonine 148 is modified to Phosphothreonine. The stretch at 150–218 (EARDLELLIQ…QQRRHREHPK (69 aa)) forms a coiled coil. The DNA-binding element occupies 172–218 (HHEEFKRYEMLKEHERRRYLESLGEEQRKEAERRLEEQQRRHREHPK). Residues 193–210 (SLGEEQRKEAERRLEEQQ) are compositionally biased toward basic and acidic residues. The disordered stretch occupies residues 193-221 (SLGEEQRKEAERRLEEQQRRHREHPKVNV). The segment at 228–321 (LKEVWEELDG…VTLGEFLAST (94 aa)) is binds to GNAI2 and GNAI3. EF-hand domains follow at residues 240–275 (PNRF…ELEK) and 292–327 (ERLR…KEFG). Residues aspartate 253, asparagine 255, aspartate 257, glutamate 264, aspartate 305, asparagine 307, aspartate 309, and glutamate 316 each contribute to the Ca(2+) site. The GBA motif lies at 303–333 (NVDTNQDRLVTLGEFLASTQRKEFGDTGEGW). Positions 341–409 (AYTEEELRRF…KQQQQQQQQQ (69 aa)) form a coiled coil. Residues 368 to 463 (LSQETEALGR…LPEVEVPQHL (96 aa)) are disordered. Serine 369 carries the phosphoserine modification. Residues 439–463 (DQKEVDTSEKKLLERLPEVEVPQHL) are compositionally biased toward basic and acidic residues.

It belongs to the nucleobindin family. In terms of assembly, interacts (via GBA motif) with guanine nucleotide-binding protein G(i) alpha subunits GNAI1, GNAI2 and GNAI3 with higher affinity for GNAI1 and GNAI3 than for GNAI2. Preferentially interacts with inactive rather than active GNAI3. Interaction with GNAI3 is inhibited when NUCB1 binds calcium, probably due to a conformational change which renders the GBA motif inaccessible.

It localises to the golgi apparatus. The protein localises to the cis-Golgi network membrane. Its subcellular location is the cytoplasm. The protein resides in the secreted. In terms of biological role, major calcium-binding protein of the Golgi which may have a role in calcium homeostasis. Acts as a non-receptor guanine nucleotide exchange factor which binds to and activates alpha subunits of guanine nucleotide-binding proteins (G proteins). This is Nucleobindin-1 (NUCB1) from Pongo abelii (Sumatran orangutan).